The primary structure comprises 144 residues: Large ribosomal subunit protein uL16 (144 aa).

The protein belongs to the universal ribosomal protein uL16 family. As to quaternary structure, part of the 50S ribosomal subunit.

In terms of biological role, binds 23S rRNA and is also seen to make contacts with the A and possibly P site tRNAs. This chain is Large ribosomal subunit protein uL16, found in Acidobacterium capsulatum (strain ATCC 51196 / DSM 11244 / BCRC 80197 / JCM 7670 / NBRC 15755 / NCIMB 13165 / 161).